Here is a 590-residue protein sequence, read N- to C-terminus: Leukocyte immunoglobulin-like receptor subfamily B member 5 (590 aa).

An N-terminal signal peptide occupies residues 1–23 (MTLTLSVLICLGLSVGPRTCVQA). Residues 24 to 458 (GTLPKPTLWA…PQSGLGRHLG (435 aa)) are Extracellular-facing. Ig-like C2-type domains follow at residues 27-116 (PKPT…LELV), 111-228 (DPLE…SLLI), 224-313 (PSLL…DPLD), and 337-418 (GENV…LVVS). The cysteines at positions 49 and 98 are disulfide-linked. A glycan (N-linked (GlcNAc...) asparagine) is linked at asparagine 139. Intrachain disulfides connect cysteine 144–cysteine 195 and cysteine 244–cysteine 295. N-linked (GlcNAc...) asparagine glycosylation is found at asparagine 279 and asparagine 339. Cysteine 344 and cysteine 395 are joined by a disulfide. Low complexity predominate over residues 416-433 (VVSGPSGDPSLSPTGSTP). A disordered region spans residues 416–449 (VVSGPSGDPSLSPTGSTPTPGPEDQPLTPTGLDP). A helical transmembrane segment spans residues 459-479 (VVTGVSVAFVLLLFLLLFLLL). Over 480–590 (RHRHQSKHRT…PSIYAPLAIH (111 aa)) the chain is Cytoplasmic. 2 disordered regions span residues 488–514 (RTSA…KRAS) and 529–550 (KDTQ…EAPQ). Residue serine 514 is modified to Phosphoserine. Positions 552 to 557 (VTYAQL) match the ITIM motif 1 motif. Residues 562 to 578 (LRREATEPPPSQEREPP) show a composition bias toward basic and acidic residues. Residues 562–590 (LRREATEPPPSQEREPPAEPSIYAPLAIH) form a disordered region. The short motif at 582-587 (SIYAPL) is the ITIM motif 2 element.

As to expression, detected in a natural killer (NK) cells.

It is found in the membrane. Functionally, may act as receptor for class I MHC antigens. The sequence is that of Leukocyte immunoglobulin-like receptor subfamily B member 5 (LILRB5) from Homo sapiens (Human).